Here is a 166-residue protein sequence, read N- to C-terminus: Transcription factor HES-5 (166 aa).

The bHLH domain maps to 16 to 72 (KNRLRKPVVEKMRRDRINSSIEQLKLLLEQEFARHQPNSKLEKADILEMAVSYLKHS). One can recognise an Orange domain in the interval 88 to 119 (YSEGYSWCLQEAVQFLTLHAASDTQMKLLYHF). A disordered region spans residues 125-144 (APAAPAKEPKAPGAAPPPAL). Positions 163 to 166 (WRPW) match the WRPW motif motif.

Transcription repression requires formation of a complex with a corepressor protein of the Groucho/TLE family. Expressed in fetal heart and brain tumors.

It localises to the nucleus. Transcriptional repressor of genes that require a bHLH protein for their transcription. Plays an important role as neurogenesis negative regulator. This is Transcription factor HES-5 (HES5) from Homo sapiens (Human).